The chain runs to 237 residues: Probable transcriptional regulatory protein EAT1b_0153 (237 aa).

The protein belongs to the TACO1 family. YeeN subfamily.

The protein resides in the cytoplasm. The sequence is that of Probable transcriptional regulatory protein EAT1b_0153 from Exiguobacterium sp. (strain ATCC BAA-1283 / AT1b).